The sequence spans 65 residues: MRMSLIGERFTEEEQKLLLNILINHEYAIELLSSEINDIETGTKNVDGTTYKKLVTLYDRFRFEN.

This is an uncharacterized protein from Bacillus subtilis (strain 168).